The primary structure comprises 354 residues: Probable L-ascorbate-6-phosphate lactonase UlaG (354 aa).

This sequence belongs to the UlaG family. The cofactor is a divalent metal cation.

Its subcellular location is the cytoplasm. It catalyses the reaction L-ascorbate 6-phosphate + H2O = 3-dehydro-L-gulonate 6-phosphate. Its pathway is cofactor degradation; L-ascorbate degradation; D-xylulose 5-phosphate from L-ascorbate: step 1/4. Probably catalyzes the hydrolysis of L-ascorbate-6-P into 3-keto-L-gulonate-6-P. Is essential for L-ascorbate utilization under anaerobic conditions. The polypeptide is Probable L-ascorbate-6-phosphate lactonase UlaG (Salmonella agona (strain SL483)).